The sequence spans 228 residues: Glycerol-3-phosphate acyltransferase (228 aa).

Transmembrane regions (helical) follow at residues 1–21 (MINW…LGAT), 56–76 (VPAL…IALV), 104–124 (MVII…WIGF), 136–156 (ILLA…IVVL), 161–181 (IVSL…FFTG), and 183–203 (PLPY…RHIS).

This sequence belongs to the PlsY family. As to quaternary structure, probably interacts with PlsX.

It localises to the cell inner membrane. It carries out the reaction an acyl phosphate + sn-glycerol 3-phosphate = a 1-acyl-sn-glycero-3-phosphate + phosphate. The protein operates within lipid metabolism; phospholipid metabolism. Its function is as follows. Catalyzes the transfer of an acyl group from acyl-phosphate (acyl-PO(4)) to glycerol-3-phosphate (G3P) to form lysophosphatidic acid (LPA). This enzyme utilizes acyl-phosphate as fatty acyl donor, but not acyl-CoA or acyl-ACP. The sequence is that of Glycerol-3-phosphate acyltransferase from Trichodesmium erythraeum (strain IMS101).